A 763-amino-acid chain; its full sequence is Putative alpha-1,3-mannosyltransferase MNN15 (763 aa).

Over methionine 1–lysine 7 the chain is Cytoplasmic. Residues isoleucine 8 to valine 28 traverse the membrane as a helical segment. The Lumenal portion of the chain corresponds to aspartate 29 to isoleucine 763. Asparagine 71, asparagine 157, and asparagine 169 each carry an N-linked (GlcNAc...) asparagine glycan. Residues leucine 617–proline 659 are disordered. A compositionally biased stretch (basic and acidic residues) spans lysine 649–proline 659.

Belongs to the MNN1/MNT family.

Its subcellular location is the golgi apparatus membrane. It participates in protein modification; protein glycosylation. Functionally, responsible for addition of the terminal mannose residues to the outer chain of core N-linked polysaccharides and to O-linked mannotriose. Implicated in late Golgi modifications. This chain is Putative alpha-1,3-mannosyltransferase MNN15 (MNN15), found in Candida albicans (strain SC5314 / ATCC MYA-2876) (Yeast).